Reading from the N-terminus, the 345-residue chain is D-apiose dehydrogenase (345 aa).

15 to 16 (FF) serves as a coordination point for NAD(+). Residues Trp24, Lys25, Val27, and Ala30 each contribute to the Mg(2+) site. Residues Asp37, Ser79, 97-98 (QK), Asn126, and 165-167 (QPY) contribute to the NAD(+) site. Lys98 serves as a coordination point for substrate. Substrate is bound by residues Gln165, Asp178, His182, and Tyr232.

The protein belongs to the Gfo/Idh/MocA family.

It carries out the reaction D-apiofuranose + NAD(+) = D-apionolactone + NADH + H(+). The protein operates within carbohydrate metabolism. In terms of biological role, involved in catabolism of D-apiose. Catalyzes oxidation of D-apiose to D-apionolactone. The polypeptide is D-apiose dehydrogenase (Rhizobium rhizogenes (strain K84 / ATCC BAA-868) (Agrobacterium radiobacter)).